We begin with the raw amino-acid sequence, 301 residues long: Mitochondrial substrate carrier family protein X (301 aa).

The Mitochondrial intermembrane portion of the chain corresponds to 1–23; sequence MVQQQQQQQQIKKNQVKPPLYSN. Solcar repeat units lie at residues 18–109, 117–199, and 208–296; these read PPLY…FRTR, IKLW…MKHN, and IGLP…QKSF. The helical transmembrane segment at 24–44 threads the bilayer; the sequence is LIAGAIAGVIGSSVVFPLDFV. Over 45–75 the chain is Mitochondrial matrix; the sequence is KTRLQQQRVSIDGSKQYNGIIDCFKKVIKNE. The chain crosses the membrane as a helical span at residues 76-97; that stretch reads GGVRGLYRGLSSNLIGIIPEKA. The Mitochondrial intermembrane portion of the chain corresponds to 98–122; sequence LKLAMNDYFRTRFQGDRSYIKLWEE. A helical membrane pass occupies residues 123–143; sequence VASGGLAGMCQVVATNPMELV. Topologically, residues 144 to 173 are mitochondrial matrix; the sequence is KIRMQVSGLSGKKASLKEVVSELGIKGLYK. Residues 174–194 form a helical membrane-spanning segment; it reads GTASTLLRDVPFSMIYFSIYG. Topologically, residues 195 to 207 are mitochondrial intermembrane; that stretch reads RMKHNLTDQETGE. The helical transmembrane segment at 208–228 threads the bilayer; that stretch reads IGLPKILLCGITAGSIAASVS. Over 229–271 the chain is Mitochondrial matrix; it reads TPFDVIKTRIQVKPGPNDPHYKGIADCFRKTIQSEGPKALFKG. Residues 272-292 traverse the membrane as a helical segment; the sequence is VLPRVCIISPLFGITLVVYEI. At 293 to 301 the chain is on the mitochondrial intermembrane side; it reads QKSFYASTH.

Belongs to the mitochondrial carrier (TC 2.A.29) family.

It is found in the mitochondrion inner membrane. In terms of biological role, mitochondrial solute carriers shuttle metabolites, nucleotides, and cofactors through the mitochondrial inner membrane. This is Mitochondrial substrate carrier family protein X (mcfX) from Dictyostelium discoideum (Social amoeba).